The following is a 275-amino-acid chain: Ribosomal protein L11 methyltransferase (275 aa).

S-adenosyl-L-methionine-binding residues include Thr123, Gly146, Asp167, and Asn208.

This sequence belongs to the methyltransferase superfamily. PrmA family.

The protein resides in the cytoplasm. The catalysed reaction is L-lysyl-[protein] + 3 S-adenosyl-L-methionine = N(6),N(6),N(6)-trimethyl-L-lysyl-[protein] + 3 S-adenosyl-L-homocysteine + 3 H(+). Functionally, methylates ribosomal protein L11. In Campylobacter fetus subsp. fetus (strain 82-40), this protein is Ribosomal protein L11 methyltransferase.